The following is a 122-amino-acid chain: Large ribosomal subunit protein uL14 (122 aa).

The protein belongs to the universal ribosomal protein uL14 family. Part of the 50S ribosomal subunit. Forms a cluster with proteins L3 and L19. In the 70S ribosome, L14 and L19 interact and together make contacts with the 16S rRNA in bridges B5 and B8.

Binds to 23S rRNA. Forms part of two intersubunit bridges in the 70S ribosome. In Carboxydothermus hydrogenoformans (strain ATCC BAA-161 / DSM 6008 / Z-2901), this protein is Large ribosomal subunit protein uL14.